Reading from the N-terminus, the 412-residue chain is F-box/WD repeat-containing protein 4 (412 aa).

The F-box domain occupies 25 to 71 (GPALWRLPEELLLLICSYLDMRALGRLAQVCRWLRRFTSCDLLWRRI). WD repeat units lie at residues 154–190 (RPLGVFAGHDEDVCHFVLANSHIVSAGGDGKIGIHKI), 193–229 (TFTVKYSAHEQEVNCVDCKGGIIVSGSRDRTAKVWPL), 236–277 (QCLH…IWDL), 283–321 (MTHLGSDFPPGAGVLDVMYESPFTLLSCGYDTYVRYWDL), 327–366 (KCVMEWEEPHDSTLYCLQTDGNHLLATGSSYYGVVRLWDR), and 373–409 (HAFPLTSTPLSSPVYCLRLTTKHLYAALSYNLHVLDF).

In terms of assembly, part of a SCF (SKP1-cullin-F-box) protein ligase complex. Interacts with POUF51. Expressed in brain, kidney, lung and liver.

In terms of biological role, probably recognizes and binds to some phosphorylated proteins and promotes their ubiquitination and degradation. Likely to be involved in key signaling pathways crucial for normal limb development. May participate in Wnt signaling. The polypeptide is F-box/WD repeat-containing protein 4 (FBXW4) (Homo sapiens (Human)).